Consider the following 529-residue polypeptide: UDP-glucuronosyltransferase 2B1 (529 aa).

Positions 1-23 (MSMKQTSVFLLIQLICYFRPGAC) are cleaved as a signal peptide. Residues Asn-134 and Asn-316 are each glycosylated (N-linked (GlcNAc...) asparagine). A helical membrane pass occupies residues 494 to 510 (VIGFLLLCVVGVVFIIT).

It belongs to the UDP-glycosyltransferase family.

It localises to the endoplasmic reticulum membrane. The catalysed reaction is glucuronate acceptor + UDP-alpha-D-glucuronate = acceptor beta-D-glucuronoside + UDP + H(+). The enzyme catalyses 17beta-estradiol + UDP-alpha-D-glucuronate = 17beta-estradiol 17-O-(beta-D-glucuronate) + UDP + H(+). Functionally, UDP-glucuronosyltransferase (UGT) that catalyzes phase II biotransformation reactions in which lipophilic substrates are conjugated with glucuronic acid to increase the metabolite's water solubility, thereby facilitating excretion into either the urine or bile. Essential for the elimination and detoxification of drugs, xenobiotics and endogenous compounds. Catalyzes the glucuronidation of the endogenous estrogen hormone estradiol. The sequence is that of UDP-glucuronosyltransferase 2B1 from Rattus norvegicus (Rat).